Consider the following 315-residue polypeptide: MSLVEKNTASEDAFALSEATARDYLVLLKPRVMSLVVFTGLVGLVLAPGHMNPVLAVISILCIAVGAGASGALNMWYDADIDAVMKRTRKRPIPAGIIAPNQVLAFGLTLSAFSVMTLGLMVNWLAAALLAFTIFFYAVIYTMWLKRSTPQNIVIGGAAGAFPPMIGWAAATGEITWDSLVLFMIIFLWTPPHFWALSLFTTNDYEAARIPMMPNVKGELSTRRQALFYAVLMAPVGVLPWVMGFAGMFYGVVSTLLGLAFVYYAWRLWAADSQPQMLAAARKLFRFSLLYLAGIFAVLLFEALTFKLLAAFGVF.

The next 9 helical transmembrane spans lie at 32–52 (VMSLVVFTGLVGLVLAPGHMN), 53–73 (PVLAVISILCIAVGAGASGAL), 93–113 (IPAGIIAPNQVLAFGLTLSAF), 120–140 (LMVNWLAAALLAFTIFFYAVI), 153–173 (IVIGGAAGAFPPMIGWAAATG), 180–200 (LVLFMIIFLWTPPHFWALSLF), 226–246 (ALFYAVLMAPVGVLPWVMGFA), 249–269 (FYGVVSTLLGLAFVYYAWRLW), and 295–315 (IFAVLLFEALTFKLLAAFGVF).

This sequence belongs to the UbiA prenyltransferase family. Protoheme IX farnesyltransferase subfamily.

Its subcellular location is the cell inner membrane. The enzyme catalyses heme b + (2E,6E)-farnesyl diphosphate + H2O = Fe(II)-heme o + diphosphate. It functions in the pathway porphyrin-containing compound metabolism; heme O biosynthesis; heme O from protoheme: step 1/1. Its function is as follows. Converts heme B (protoheme IX) to heme O by substitution of the vinyl group on carbon 2 of heme B porphyrin ring with a hydroxyethyl farnesyl side group. In Brucella canis (strain ATCC 23365 / NCTC 10854 / RM-666), this protein is Protoheme IX farnesyltransferase.